A 2108-amino-acid chain; its full sequence is Mucin-5B (2108 aa).

An N-terminal signal peptide occupies residues 1–21 (MEIKKERSFWIFCLIWSFCKG). Residues 36 to 203 (SECTTWGNFH…KVEDPSEKCP (168 aa)) form the VWFD 1 domain. Disulfide bonds link cysteine 38-cysteine 166 and cysteine 60-cysteine 202. A disordered region spans residues 196-219 (EDPSEKCPDVRPDDHTGRHPTEDD). Positions 304–360 (CPSNMEYMECGNSCADTCADPERSKICKAPCTDGCFCPPGTILDDLGGKKCVPRDSC) constitute a TIL 1 domain. A glycan (N-linked (GlcNAc...) (complex) asparagine) is linked at asparagine 381. A VWFD 2 domain is found at 398–570 (GSCSIDGGFH…NSWKTRASCF (173 aa)). 3 disulfides stabilise this stretch: cysteine 400–cysteine 534, cysteine 422–cysteine 569, and cysteine 443–cysteine 451. 4 N-linked (GlcNAc...) (complex) asparagine glycosylation sites follow: asparagine 528, asparagine 599, asparagine 680, and asparagine 772. The 58-residue stretch at 666–723 (CPETMVYNYSVKYCNQSCRSLDEPDPLCKVQIAPMEGCGCPEGTYLNDEEECVTPDDC) folds into the TIL 2 domain. The 44-residue stretch at 782–825 (GSECQKSCKTQDMHCYVTECVSGCMCPDGLVLDGSGGCIPKDQC) folds into the TIL 3 domain. In terms of domain architecture, VWFC 1 spans 825 to 897 (CPCVHGGHFY…DYILAQDFCP (73 aa)). Asparagine 855 is a glycosylation site (N-linked (GlcNAc...) (complex) asparagine). The region spanning 863–1033 (GTCTVYGNGH…NSWKITSTCS (171 aa)) is the VWFD 3 domain. 4 cysteine pairs are disulfide-bonded: cysteine 865/cysteine 997, cysteine 887/cysteine 1032, cysteine 896/cysteine 994, and cysteine 914/cysteine 921. N-linked (GlcNAc...) (complex) asparagine glycans are attached at residues asparagine 1036, asparagine 1219, asparagine 1371, and asparagine 1452. The VWFD 4 domain maps to 1429 to 1613 (CICSGWGNEH…APVSTNRYCN (185 aa)). 3 cysteine pairs are disulfide-bonded: cysteine 1431/cysteine 1573, cysteine 1453/cysteine 1612, and cysteine 1477/cysteine 1485. N-linked (GlcNAc...) (complex) asparagine glycosylation is found at asparagine 1567, asparagine 1639, asparagine 1792, asparagine 1807, and asparagine 1841. Residues 1761 to 1832 (CGCTAQDGSV…DPCCTETVCE (72 aa)) form the VWFC 2 domain. Residues 1870-1937 (GVCVSEGVEF…KEGQCCSQCQ (68 aa)) form the VWFC 3 domain. Asparagine 1964 is a glycosylation site (N-linked (GlcNAc...) (complex) asparagine). 4 cysteine pairs are disulfide-bonded: cysteine 2010-cysteine 2066, cysteine 2031-cysteine 2080, cysteine 2042-cysteine 2096, and cysteine 2046-cysteine 2098. In terms of domain architecture, CTCK spans 2010-2104 (CIDLPHKCKR…ECGCVETKCP (95 aa)).

Homomultimer; disulfide-linked. The N- and C-terminus mediate their assembly into higher order structures to form filaments. The CTCK domains of two polypeptides associate in the endoplasmic reticulum to generate intermolecularly disulfide-bonded dimers. These dimers progress to the Golgi apparatus, which is a more acidic environment than the endoplasmic reticulum. Under acidic conditions, the N-termini form non-covalent intermolecular interactions that juxtapose assemblies from different CTCK-linked dimers to produce long, disulfide-linked polymers that remain highly compact until secretion. N-glycosylated. Complex glycosylation with bisecting N-acetylglucosamine. Contains mainly N-acetylglucosamine (3.1-8.5%), mannose (2.9-4.6%), a small amount of galactose (1.1-4.35) and sialic acid (0.3-1.3%). Most abundant glycan is composed of a GlcNAc(2)Man(3) core, a bisecting GlcNAc and another 3 GlcNAc antannae located on the mannoses of the core. Site Asn-1639 exists both in glycosylated and non-glycosylated forms.

It localises to the secreted. Functionally, ovomucin, the glycoprotein responsible for the gel properties of egg white, is composed for 2 subunits, alpha-ovomucin/MUC5B and beta-ovomucin/MUC6. The protein is Mucin-5B (MUC5B) of Gallus gallus (Chicken).